We begin with the raw amino-acid sequence, 652 residues long: DNA ligase (652 aa).

NAD(+)-binding positions include 29-33 (DSEYD), 78-79 (SL), and Glu107. Lys109 functions as the N6-AMP-lysine intermediate in the catalytic mechanism. Residues Arg130, Glu164, Lys278, and Lys302 each coordinate NAD(+). Residues Cys395, Cys398, Cys413, and Cys418 each coordinate Zn(2+). The 76-residue stretch at 577–652 (VADAALSGLT…VRDEAWLESL (76 aa)) folds into the BRCT domain.

Belongs to the NAD-dependent DNA ligase family. LigA subfamily. It depends on Mg(2+) as a cofactor. Requires Mn(2+) as cofactor.

The catalysed reaction is NAD(+) + (deoxyribonucleotide)n-3'-hydroxyl + 5'-phospho-(deoxyribonucleotide)m = (deoxyribonucleotide)n+m + AMP + beta-nicotinamide D-nucleotide.. Functionally, DNA ligase that catalyzes the formation of phosphodiester linkages between 5'-phosphoryl and 3'-hydroxyl groups in double-stranded DNA using NAD as a coenzyme and as the energy source for the reaction. It is essential for DNA replication and repair of damaged DNA. In Streptococcus pneumoniae serotype 4 (strain ATCC BAA-334 / TIGR4), this protein is DNA ligase.